We begin with the raw amino-acid sequence, 628 residues long: 1,4-alpha-glucan branching enzyme GlgB (628 aa).

The active-site Nucleophile is the aspartate 304. Glutamate 355 acts as the Proton donor in catalysis.

Belongs to the glycosyl hydrolase 13 family. GlgB subfamily. As to quaternary structure, monomer.

It catalyses the reaction Transfers a segment of a (1-&gt;4)-alpha-D-glucan chain to a primary hydroxy group in a similar glucan chain.. It functions in the pathway glycan biosynthesis; glycogen biosynthesis. In terms of biological role, catalyzes the formation of the alpha-1,6-glucosidic linkages in glycogen by scission of a 1,4-alpha-linked oligosaccharide from growing alpha-1,4-glucan chains and the subsequent attachment of the oligosaccharide to the alpha-1,6 position. The chain is 1,4-alpha-glucan branching enzyme GlgB from Streptococcus mutans serotype c (strain ATCC 700610 / UA159).